We begin with the raw amino-acid sequence, 504 residues long: Glycerol kinase (504 aa).

Thr-13 is an ADP binding site. 3 residues coordinate ATP: Thr-13, Thr-14, and Ser-15. Residue Thr-13 coordinates sn-glycerol 3-phosphate. Arg-17 lines the ADP pocket. Sn-glycerol 3-phosphate-binding residues include Arg-83, Glu-84, and Tyr-135. Residues Arg-83, Glu-84, and Tyr-135 each contribute to the glycerol site. His-231 carries the post-translational modification Phosphohistidine; by HPr. Asp-245 is a sn-glycerol 3-phosphate binding site. 2 residues coordinate glycerol: Asp-245 and Gln-246. ADP contacts are provided by Thr-267 and Gly-310. ATP is bound by residues Thr-267, Gly-310, Gln-314, and Gly-411. The ADP site is built by Gly-411 and Asn-415.

The protein belongs to the FGGY kinase family. Homotetramer and homodimer (in equilibrium). In terms of processing, the phosphoenolpyruvate-dependent sugar phosphotransferase system (PTS), including enzyme I, and histidine-containing protein (HPr) are required for the phosphorylation, which leads to the activation of the enzyme.

It catalyses the reaction glycerol + ATP = sn-glycerol 3-phosphate + ADP + H(+). It participates in polyol metabolism; glycerol degradation via glycerol kinase pathway; sn-glycerol 3-phosphate from glycerol: step 1/1. Its activity is regulated as follows. Activated by phosphorylation and inhibited by fructose 1,6-bisphosphate (FBP). In terms of biological role, key enzyme in the regulation of glycerol uptake and metabolism. Catalyzes the phosphorylation of glycerol to yield sn-glycerol 3-phosphate. This is Glycerol kinase from Pediococcus pentosaceus (strain ATCC 25745 / CCUG 21536 / LMG 10740 / 183-1w).